A 1665-amino-acid polypeptide reads, in one-letter code: Mediator of RNA polymerase II transcription subunit 13 (1665 aa).

4 disordered regions span residues 411 to 460 (KETE…IDKN), 482 to 512 (INLD…ETKP), 551 to 580 (TVSQ…GTET), and 673 to 781 (LDSS…NQIS). The segment covering 415–445 (PENESENDMEIDDLFGGDESDDNDDLEEAGN) has biased composition (acidic residues). Basic and acidic residues predominate over residues 499–512 (VPDKENFKPKETKP). Residues 551-568 (TVSQSAVTTNPPSVGSAP) show a composition bias toward low complexity. Positions 682-720 (EGGEDIEDDDNDYEDEGDDDEEEEGEEEEEEESDEDEIS) are enriched in acidic residues. A compositionally biased stretch (polar residues) spans 728–762 (LKLNTQNESVPPQQSNYNPVNITDSGSNTTNNITD).

Belongs to the Mediator complex subunit 13 family. In terms of assembly, component of the SRB8-11 complex, which itself associates with the Mediator complex.

Its subcellular location is the nucleus. Functionally, component of the SRB8-11 complex. The SRB8-11 complex is a regulatory module of the Mediator complex which is itself involved in regulation of basal and activated RNA polymerase II-dependent transcription. The SRB8-11 complex may be involved in the transcriptional repression of a subset of genes regulated by Mediator. It may inhibit the association of the Mediator complex with RNA polymerase II to form the holoenzyme complex. The sequence is that of Mediator of RNA polymerase II transcription subunit 13 (SSN2) from Candida albicans (strain SC5314 / ATCC MYA-2876) (Yeast).